Here is a 352-residue protein sequence, read N- to C-terminus: NAD(+)-dependent homoserine dehydrogenase (352 aa).

This sequence belongs to the homoserine dehydrogenase family.

It catalyses the reaction L-homoserine + NAD(+) = L-aspartate 4-semialdehyde + NADH + H(+). Its function is as follows. Dehydrogenase involved in the degradation of canavanine, the delta-oxa-analog of arginine, allowing growth on canavanine as sole nitrogen and carbon source. Catalyzes the conversion of homoserine and NAD(+) to aspartate-semialdehyde and NADH. Is highly specific for NAD(+) and cannot use NADP(+). This is NAD(+)-dependent homoserine dehydrogenase from Pseudomonas canavaninivorans.